Reading from the N-terminus, the 120-residue chain is Large ribosomal subunit protein uL18 (120 aa).

Residues 1–25 form a disordered region; it reads MKQTRTAARQSRHQRIRRKVKGTSD. The span at 10 to 21 shows a compositional bias: basic residues; it reads QSRHQRIRRKVK.

It belongs to the universal ribosomal protein uL18 family. Part of the 50S ribosomal subunit; part of the 5S rRNA/L5/L18/L25 subcomplex. Contacts the 5S and 23S rRNAs.

Its function is as follows. This is one of the proteins that bind and probably mediate the attachment of the 5S RNA into the large ribosomal subunit, where it forms part of the central protuberance. The sequence is that of Large ribosomal subunit protein uL18 from Thermosynechococcus vestitus (strain NIES-2133 / IAM M-273 / BP-1).